Consider the following 353-residue polypeptide: UPF0283 membrane protein YPTS_2342 (353 aa).

A run of 3 helical transmembrane segments spans residues 71 to 91 (MVTAGMVILGASVIAQSVQWV), 101 to 121 (IALGATTAGGLIILAGVGSVV), and 214 to 234 (ESALMIAVSPLALVDMAFIAW).

The protein belongs to the UPF0283 family.

The protein resides in the cell inner membrane. The chain is UPF0283 membrane protein YPTS_2342 from Yersinia pseudotuberculosis serotype IB (strain PB1/+).